The sequence spans 560 residues: DNA-directed primase/polymerase protein (560 aa).

Residues 1–22 are a coiled coil; sequence MNRKWEAKLKQIEERASHYERK. Substrate contacts are provided by residues Arg76, 114–116, and 165–169; these read DLE and KFSRH. Residues Asp114 and Glu116 each coordinate Mn(2+). The tract at residues 203-223 is disordered; it reads EDDDSAPETTGHGFPHFSEAP. A Phosphoserine modification is found at Ser255. Residues 288–291 and Lys297 each bind substrate; that span reads RNFR. Cys419, His426, Cys446, and Cys451 together coordinate Zn(2+). Positions 419 to 452 match the Zinc knuckle motif motif; the sequence is CENIGRAHKSNNIMILVDLKNEVWYQKCHDPVCK. Positions 480 to 507 are disordered; it reads TTDEADETRSNETQNPHKPSPSRLSTGA. Residues 481 to 560 are interaction with RPA1; that stretch reads TDEADETRSN…DELIIEVLQE (80 aa). Residues 490-507 show a composition bias toward polar residues; it reads NETQNPHKPSPSRLSTGA. Short sequence motifs (RPA1-binding motif) lie at residues 513–527 and 548–556; these read WDNGIDDAYFLEATE and EIPDELIIE.

It belongs to the eukaryotic-type primase small subunit family. In terms of assembly, interacts with RPA1; leading to recruitment to chromatin and stimulate DNA primase activity. Interacts with SSBP1. Interacts with POLDIP2; leading to enhance DNA polymerase activity. It depends on Mn(2+) as a cofactor.

The protein resides in the nucleus. It is found in the mitochondrion matrix. The protein localises to the chromosome. It carries out the reaction ssDNA + n NTP = ssDNA/pppN(pN)n-1 hybrid + (n-1) diphosphate.. It catalyses the reaction DNA(n) + a 2'-deoxyribonucleoside 5'-triphosphate = DNA(n+1) + diphosphate. DNA primase and DNA polymerase required to tolerate replication-stalling lesions by bypassing them. Required to facilitate mitochondrial and nuclear replication fork progression by initiating de novo DNA synthesis using dNTPs and acting as an error-prone DNA polymerase able to bypass certain DNA lesions. Shows a high capacity to tolerate DNA damage lesions such as 8oxoG and abasic sites in DNA. Provides different translesion synthesis alternatives when DNA replication is stalled: able to synthesize DNA primers downstream of lesions, such as ultraviolet (UV) lesions, R-loops and G-quadruplexes, to allow DNA replication to continue. Can also realign primers ahead of 'unreadable lesions' such as abasic sites and 6-4 photoproduct (6-4 pyrimidine-pyrimidinone), thereby skipping the lesion. Repriming avoids fork degradation while leading to accumulation of internal ssDNA gaps behind the forks. Also able to incorporate nucleotides opposite DNA lesions such as 8oxoG, like a regular translesion synthesis DNA polymerase. Also required for reinitiating stalled forks after UV damage during nuclear DNA replication. Required for mitochondrial DNA (mtDNA) synthesis and replication, by reinitiating synthesis after UV damage or in the presence of chain-terminating nucleotides. Prevents APOBEC family-mediated DNA mutagenesis by repriming downstream of abasic site to prohibit error-prone translesion synthesis. Has non-overlapping function with POLH. In addition to its role in DNA damage response, also required to maintain efficient nuclear and mitochondrial DNA replication in unperturbed cells. This chain is DNA-directed primase/polymerase protein, found in Homo sapiens (Human).